Consider the following 313-residue polypeptide: GTP cyclohydrolase MptA (313 aa).

This sequence belongs to the GTP cyclohydrolase IV family. Homodimer. Requires Fe(2+) as cofactor.

It carries out the reaction GTP + H2O = 7,8-dihydroneopterin 2',3'-cyclic phosphate + formate + diphosphate + H(+). It participates in cofactor biosynthesis; 5,6,7,8-tetrahydromethanopterin biosynthesis. Its function is as follows. Converts GTP to 7,8-dihydro-D-neopterin 2',3'-cyclic phosphate, the first intermediate in the biosynthesis of coenzyme methanopterin. This Methanoculleus marisnigri (strain ATCC 35101 / DSM 1498 / JR1) protein is GTP cyclohydrolase MptA.